Here is a 36-residue protein sequence, read N- to C-terminus: MAASFLPSILVPLVGLVFPAIAIASLFIYIEQDEII.

The helical transmembrane segment at 5–27 (FLPSILVPLVGLVFPAIAIASLF) threads the bilayer.

It belongs to the PsaI family.

The protein resides in the plastid. It localises to the chloroplast thylakoid membrane. In terms of biological role, may help in the organization of the PsaL subunit. This chain is Photosystem I reaction center subunit VIII, found in Chaetosphaeridium globosum (Charophycean green alga).